Here is a 550-residue protein sequence, read N- to C-terminus: Ribosomal protein S6 kinase beta (550 aa).

One can recognise a Protein kinase domain in the interval phenylalanine 83–phenylalanine 344. ATP contacts are provided by residues leucine 89–valine 97 and lysine 115. Aspartate 210 serves as the catalytic Proton acceptor. One can recognise an AGC-kinase C-terminal domain in the interval lysine 345–asparagine 415. Threonine 404 is modified (phosphothreonine). 2 disordered regions span residues arginine 433–serine 466 and threonine 484–methionine 550. Serine 439 is modified (phosphoserine). Over residues threonine 520 to asparagine 534 the composition is skewed to low complexity.

It belongs to the protein kinase superfamily. AGC Ser/Thr protein kinase family. S6 kinase subfamily. Mg(2+) serves as cofactor. Post-translationally, may be phosphorylated on Thr-404 by let-363/TOR.

It is found in the cell projection. Its subcellular location is the axon. The protein localises to the perikaryon. The enzyme catalyses L-seryl-[protein] + ATP = O-phospho-L-seryl-[protein] + ADP + H(+). It catalyses the reaction L-threonyl-[protein] + ATP = O-phospho-L-threonyl-[protein] + ADP + H(+). In terms of biological role, serine/threonine-protein kinase which regulates mRNA translation. Negatively regulates lifespan and resistance to starvation, oxidative stress, protein aggregation and P.aeruginosa-mediated infection. May regulate these processes by preventing the activation of transcription factor hif-1. Required, probably downstream of let-363/TOR, for the establishment of the proper number of germline progenitors by promoting cell cycle progression and preventing differentiation during larval development. Regulates germ cell size. In addition required for sperm production and embryo viability. Involved in axon regeneration of PLM and ALM neurons by inhibiting growth cone formation early after axotomy and later by inhibiting axon extension. Functions in axon regeneration and lifespan probably by preventing aak-2/AMPK activation. Negatively regulates autophagy. The protein is Ribosomal protein S6 kinase beta of Caenorhabditis elegans.